A 263-amino-acid polypeptide reads, in one-letter code: MVHHGQMHAQPGVGLRPDTPVASGQLPSTSIRSRRSGISKAQRETWERLWPELGLLALPQSPRGTPVDTRAWFGRDAPVVLEIGSGSGTSTLAMAKAEPHVDVIAVDVYRRGLAQLLCAIDKVGSDGINIRLILGNAVDVLQHLIAPDSLCGVRVFFPDPWPKARHHKRRLLQPATMALIADRLVPSGVLHAATDHPGYAEHIAAAGDAEPRLVRVDPDTELLPISVVRPATKYERKAQLGGGAVIELLWKKHGCSERDLKIR.

A disordered region spans residues 1–39 (MVHHGQMHAQPGVGLRPDTPVASGQLPSTSIRSRRSGIS). Residues glutamate 82, aspartate 107, asparagine 136, and aspartate 159 each coordinate S-adenosyl-L-methionine. Aspartate 159 is an active-site residue. Residues lysine 163, aspartate 195, and 232 to 235 (TKYE) each bind substrate.

It belongs to the class I-like SAM-binding methyltransferase superfamily. TrmB family.

It catalyses the reaction guanosine(46) in tRNA + S-adenosyl-L-methionine = N(7)-methylguanosine(46) in tRNA + S-adenosyl-L-homocysteine. It participates in tRNA modification; N(7)-methylguanine-tRNA biosynthesis. Functionally, catalyzes the formation of N(7)-methylguanine at position 46 (m7G46) in tRNA. This chain is tRNA (guanine-N(7)-)-methyltransferase, found in Mycobacterium bovis (strain ATCC BAA-935 / AF2122/97).